A 1099-amino-acid polypeptide reads, in one-letter code: Carbamoyl phosphate synthase large chain (1099 aa).

The interval 1-402 (MPKREDIKRI…ALGKALRSLE (402 aa)) is carboxyphosphate synthetic domain. Residues Arg129, Arg169, Gly175, Gly176, Glu208, Val210, Glu215, Gly241, Ile242, His243, Gln285, and Glu299 each coordinate ATP. Residues 133–328 (KETMEKAGLE…IAKVAALLAV (196 aa)) form the ATP-grasp 1 domain. The Mg(2+) site is built by Gln285, Glu299, and Asn301. 3 residues coordinate Mn(2+): Gln285, Glu299, and Asn301. Positions 403 to 541 (LDAAPKLDLE…STYNGVENEA (139 aa)) are oligomerization domain. Residues 542 to 944 (VPSDREKIMI…AFAKAQIAAG (403 aa)) are carbamoyl phosphate synthetic domain. In terms of domain architecture, ATP-grasp 2 spans 666 to 857 (AKLLKQIGLK…VARIAAKIMV (192 aa)). ATP is bound by residues Arg702, Lys741, Leu743, Glu748, Gly773, Val774, His775, Ser776, Gln816, and Glu828. Mg(2+) is bound by residues Gln816, Glu828, and Asn830. Residues Gln816, Glu828, and Asn830 each coordinate Mn(2+). The MGS-like domain maps to 945–1099 (NPLPTTGAIL…VRRLTDTWKM (155 aa)). Residues 945–1099 (NPLPTTGAIL…VRRLTDTWKM (155 aa)) form an allosteric domain region.

It belongs to the CarB family. Composed of two chains; the small (or glutamine) chain promotes the hydrolysis of glutamine to ammonia, which is used by the large (or ammonia) chain to synthesize carbamoyl phosphate. Tetramer of heterodimers (alpha,beta)4. Requires Mg(2+) as cofactor. Mn(2+) serves as cofactor.

It catalyses the reaction hydrogencarbonate + L-glutamine + 2 ATP + H2O = carbamoyl phosphate + L-glutamate + 2 ADP + phosphate + 2 H(+). It carries out the reaction hydrogencarbonate + NH4(+) + 2 ATP = carbamoyl phosphate + 2 ADP + phosphate + 2 H(+). It participates in amino-acid biosynthesis; L-arginine biosynthesis; carbamoyl phosphate from bicarbonate: step 1/1. It functions in the pathway pyrimidine metabolism; UMP biosynthesis via de novo pathway; (S)-dihydroorotate from bicarbonate: step 1/3. Large subunit of the glutamine-dependent carbamoyl phosphate synthetase (CPSase). CPSase catalyzes the formation of carbamoyl phosphate from the ammonia moiety of glutamine, carbonate, and phosphate donated by ATP, constituting the first step of 2 biosynthetic pathways, one leading to arginine and/or urea and the other to pyrimidine nucleotides. The large subunit (synthetase) binds the substrates ammonia (free or transferred from glutamine from the small subunit), hydrogencarbonate and ATP and carries out an ATP-coupled ligase reaction, activating hydrogencarbonate by forming carboxy phosphate which reacts with ammonia to form carbamoyl phosphate. The protein is Carbamoyl phosphate synthase large chain of Thermotoga petrophila (strain ATCC BAA-488 / DSM 13995 / JCM 10881 / RKU-1).